A 188-amino-acid chain; its full sequence is Elongation factor P (188 aa).

Position 34 is an N6-(3,6-diaminohexanoyl)-5-hydroxylysine (Lys-34).

It belongs to the elongation factor P family. Post-translationally, may be beta-lysylated on the epsilon-amino group of Lys-34 by the combined action of EpmA and EpmB, and then hydroxylated on the C5 position of the same residue by EpmC (if this protein is present). Lysylation is critical for the stimulatory effect of EF-P on peptide-bond formation. The lysylation moiety may extend toward the peptidyltransferase center and stabilize the terminal 3-CCA end of the tRNA. Hydroxylation of the C5 position on Lys-34 may allow additional potential stabilizing hydrogen-bond interactions with the P-tRNA.

The protein resides in the cytoplasm. It participates in protein biosynthesis; polypeptide chain elongation. Involved in peptide bond synthesis. Alleviates ribosome stalling that occurs when 3 or more consecutive Pro residues or the sequence PPG is present in a protein, possibly by augmenting the peptidyl transferase activity of the ribosome. Modification of Lys-34 is required for alleviation. The polypeptide is Elongation factor P (Cronobacter sakazakii (strain ATCC BAA-894) (Enterobacter sakazakii)).